We begin with the raw amino-acid sequence, 71 residues long: Large ribosomal subunit protein uL30 (71 aa).

It belongs to the universal ribosomal protein uL30 family. Part of the 50S ribosomal subunit.

In Borreliella burgdorferi (strain ATCC 35210 / DSM 4680 / CIP 102532 / B31) (Borrelia burgdorferi), this protein is Large ribosomal subunit protein uL30.